We begin with the raw amino-acid sequence, 132 residues long: Small ribosomal subunit protein uS8 (132 aa).

It belongs to the universal ribosomal protein uS8 family. As to quaternary structure, part of the 30S ribosomal subunit. Contacts proteins S5 and S12.

Functionally, one of the primary rRNA binding proteins, it binds directly to 16S rRNA central domain where it helps coordinate assembly of the platform of the 30S subunit. The sequence is that of Small ribosomal subunit protein uS8 from Staphylococcus epidermidis (strain ATCC 35984 / DSM 28319 / BCRC 17069 / CCUG 31568 / BM 3577 / RP62A).